Consider the following 257-residue polypeptide: 3-methyl-2-oxobutanoate hydroxymethyltransferase (257 aa).

Positions 42 and 86 each coordinate Mg(2+). 3-methyl-2-oxobutanoate-binding positions include 42–43 (DS), Asp86, and Lys116. Glu118 provides a ligand contact to Mg(2+). Glu185 functions as the Proton acceptor in the catalytic mechanism.

Belongs to the PanB family. As to quaternary structure, homodecamer; pentamer of dimers. It depends on Mg(2+) as a cofactor.

It localises to the cytoplasm. The catalysed reaction is 3-methyl-2-oxobutanoate + (6R)-5,10-methylene-5,6,7,8-tetrahydrofolate + H2O = 2-dehydropantoate + (6S)-5,6,7,8-tetrahydrofolate. It functions in the pathway cofactor biosynthesis; (R)-pantothenate biosynthesis; (R)-pantoate from 3-methyl-2-oxobutanoate: step 1/2. Its function is as follows. Catalyzes the reversible reaction in which hydroxymethyl group from 5,10-methylenetetrahydrofolate is transferred onto alpha-ketoisovalerate to form ketopantoate. This is 3-methyl-2-oxobutanoate hydroxymethyltransferase from Prochlorococcus marinus (strain MIT 9515).